Consider the following 350-residue polypeptide: DNA-directed RNA polymerase subunit alpha (350 aa).

The segment at 1-226 (MLISQRPTLS…ELFGLARELN (226 aa)) is alpha N-terminal domain (alpha-NTD). Residues 241-350 (ADHIASFALP…NQDYAETEQL (110 aa)) are alpha C-terminal domain (alpha-CTD). A disordered region spans residues 328–350 (GTWTSDAGYDLDDNQDYAETEQL). Acidic residues predominate over residues 336–350 (YDLDDNQDYAETEQL).

The protein belongs to the RNA polymerase alpha chain family. In terms of assembly, homodimer. The RNAP catalytic core consists of 2 alpha, 1 beta, 1 beta' and 1 omega subunit. When a sigma factor is associated with the core the holoenzyme is formed, which can initiate transcription.

It catalyses the reaction RNA(n) + a ribonucleoside 5'-triphosphate = RNA(n+1) + diphosphate. Functionally, DNA-dependent RNA polymerase catalyzes the transcription of DNA into RNA using the four ribonucleoside triphosphates as substrates. In Mycolicibacterium smegmatis (strain ATCC 700084 / mc(2)155) (Mycobacterium smegmatis), this protein is DNA-directed RNA polymerase subunit alpha.